Reading from the N-terminus, the 135-residue chain is Large ribosomal subunit protein uL16c (135 aa).

Belongs to the universal ribosomal protein uL16 family. Part of the 50S ribosomal subunit.

It localises to the plastid. The protein resides in the chloroplast. This is Large ribosomal subunit protein uL16c from Daucus carota (Wild carrot).